The following is a 94-amino-acid chain: Translation initiation factor IF-1 (94 aa).

The 72-residue stretch at 1-72 (MAKEELIQFE…EKGRLIFRHK (72 aa)) folds into the S1-like domain. A disordered region spans residues 71-94 (HKDERPGGTGAPRGAPPRGQFRRR). The segment covering 82-94 (PRGAPPRGQFRRR) has biased composition (low complexity).

It belongs to the IF-1 family. In terms of assembly, component of the 30S ribosomal translation pre-initiation complex which assembles on the 30S ribosome in the order IF-2 and IF-3, IF-1 and N-formylmethionyl-tRNA(fMet); mRNA recruitment can occur at any time during PIC assembly.

The protein resides in the cytoplasm. Its function is as follows. One of the essential components for the initiation of protein synthesis. Stabilizes the binding of IF-2 and IF-3 on the 30S subunit to which N-formylmethionyl-tRNA(fMet) subsequently binds. Helps modulate mRNA selection, yielding the 30S pre-initiation complex (PIC). Upon addition of the 50S ribosomal subunit IF-1, IF-2 and IF-3 are released leaving the mature 70S translation initiation complex. In Rhodopseudomonas palustris (strain BisB5), this protein is Translation initiation factor IF-1.